Reading from the N-terminus, the 33-residue chain is Neutrophil defensin 4 (33 aa).

3 disulfides stabilise this stretch: Cys3–Cys31, Cys5–Cys20, and Cys10–Cys30.

This sequence belongs to the alpha-defensin family. In terms of processing, HANP-2 could be a product of proteolytic N-terminal amino acid removal from HANP-4.

It is found in the secreted. Functionally, bactericidal activity, greater against Gram-positive bacteria. Low anti-fungi activity. The sequence is that of Neutrophil defensin 4 from Mesocricetus auratus (Golden hamster).